We begin with the raw amino-acid sequence, 214 residues long: Dual specificity phosphatase 29 (214 aa).

The region spanning 46-194 (HVNEVWPNLY…LRELDIELAL (149 aa)) is the Tyrosine-protein phosphatase domain. 138 to 145 (HCAMGRSR) serves as a coordination point for substrate. Residue Cys139 is the Phosphocysteine intermediate of the active site.

Belongs to the protein-tyrosine phosphatase family. Non-receptor class dual specificity subfamily.

Its subcellular location is the cytoplasm. It localises to the nucleus. It carries out the reaction O-phospho-L-tyrosyl-[protein] + H2O = L-tyrosyl-[protein] + phosphate. The enzyme catalyses O-phospho-L-seryl-[protein] + H2O = L-seryl-[protein] + phosphate. It catalyses the reaction O-phospho-L-threonyl-[protein] + H2O = L-threonyl-[protein] + phosphate. In terms of biological role, dual specificity phosphatase able to dephosphorylate phosphotyrosine, phosphoserine and phosphothreonine residues within the same substrate, with a preference for phosphotyrosine as a substrate. Involved in the modulation of AMPK and MAPK1/2 signaling pathways. This Gallus gallus (Chicken) protein is Dual specificity phosphatase 29 (DUSP29).